The following is a 184-amino-acid chain: Photosystem I assembly protein Ycf4 (184 aa).

2 helical membrane passes run 21–43 (NFCW…TSSY) and 58–80 (IFFP…SSYL).

The protein belongs to the Ycf4 family.

It localises to the plastid. Its subcellular location is the chloroplast thylakoid membrane. Its function is as follows. Seems to be required for the assembly of the photosystem I complex. The sequence is that of Photosystem I assembly protein Ycf4 from Calycanthus floridus var. glaucus (Eastern sweetshrub).